Reading from the N-terminus, the 295-residue chain is Tyrosine recombinase XerC (295 aa).

Residues 1-85 (MLTALNRYWD…ALRRFLSFLV (85 aa)) enclose the Core-binding (CB) domain. Residues 106–285 (HLPKNMDGEQ…NFQHLAEVYD (180 aa)) form the Tyr recombinase domain. Catalysis depends on residues Arg-145, Lys-169, His-237, Arg-240, and His-263. Residue Tyr-272 is the O-(3'-phospho-DNA)-tyrosine intermediate of the active site.

This sequence belongs to the 'phage' integrase family. XerC subfamily. In terms of assembly, forms a cyclic heterotetrameric complex composed of two molecules of XerC and two molecules of XerD.

Its subcellular location is the cytoplasm. Its function is as follows. Site-specific tyrosine recombinase, which acts by catalyzing the cutting and rejoining of the recombining DNA molecules. The XerC-XerD complex is essential to convert dimers of the bacterial chromosome into monomers to permit their segregation at cell division. It also contributes to the segregational stability of plasmids. This Haemophilus influenzae (strain PittEE) protein is Tyrosine recombinase XerC.